The chain runs to 490 residues: Glutamyl-tRNA(Gln) amidotransferase subunit A (490 aa).

Catalysis depends on charge relay system residues lysine 76 and serine 151. The active-site Acyl-ester intermediate is the serine 175.

The protein belongs to the amidase family. GatA subfamily. In terms of assembly, heterotrimer of A, B and C subunits.

It carries out the reaction L-glutamyl-tRNA(Gln) + L-glutamine + ATP + H2O = L-glutaminyl-tRNA(Gln) + L-glutamate + ADP + phosphate + H(+). Its function is as follows. Allows the formation of correctly charged Gln-tRNA(Gln) through the transamidation of misacylated Glu-tRNA(Gln) in organisms which lack glutaminyl-tRNA synthetase. The reaction takes place in the presence of glutamine and ATP through an activated gamma-phospho-Glu-tRNA(Gln). The protein is Glutamyl-tRNA(Gln) amidotransferase subunit A of Aromatoleum aromaticum (strain DSM 19018 / LMG 30748 / EbN1) (Azoarcus sp. (strain EbN1)).